Consider the following 407-residue polypeptide: Peptidase T (407 aa).

Residue His-77 coordinates Zn(2+). Asp-79 is an active-site residue. Asp-138 contributes to the Zn(2+) binding site. The active-site Proton acceptor is the Glu-172. Residues Glu-173, Asp-195, and His-377 each coordinate Zn(2+).

The protein belongs to the peptidase M20B family. Requires Zn(2+) as cofactor.

It localises to the cytoplasm. The catalysed reaction is Release of the N-terminal residue from a tripeptide.. In terms of biological role, cleaves the N-terminal amino acid of tripeptides. This Aeromonas hydrophila subsp. hydrophila (strain ATCC 7966 / DSM 30187 / BCRC 13018 / CCUG 14551 / JCM 1027 / KCTC 2358 / NCIMB 9240 / NCTC 8049) protein is Peptidase T.